Here is a 130-residue protein sequence, read N- to C-terminus: Splicing regulatory small protein (130 aa).

Over residues 1-10 (MRTKPQRPRA) the composition is skewed to basic residues. Disordered regions lie at residues 1-29 (MRTKPQRPRATRSYLGQPCGSPRRTEETG) and 74-130 (GRAL…STRR). The interval 16 to 22 (GQPCGSP) is mediates interaction with SRSF3. Over residues 77-98 (LEPKADPHTCPYGRKESRGEKV) the composition is skewed to basic and acidic residues. Residues 120 to 130 (SLKSGSPSTRR) are compositionally biased toward polar residues.

In terms of assembly, interacts with SRSF3; increases SRSF3 binding to specific exons.

It localises to the nucleus. Its function is as follows. Interacts with the splicing factor SRSF3 and increases its binding to specific exons within pre-mRNA, thereby regulating exon-inclusion during alternative splicing. Does not directly bind pre-mRNA and could regulate a wider range of splicing factors through a similar mechanism. The chain is Splicing regulatory small protein from Homo sapiens (Human).